The following is a 43-amino-acid chain: Metallothionein A (43 aa).

The interval 1–16 (SCAGSCKCKNCRCRSC) is beta. 14 residues coordinate a divalent metal cation: Cys-2, Cys-6, Cys-8, Cys-11, Cys-13, Cys-16, Cys-20, Cys-21, Cys-23, Cys-24, Cys-28, Cys-31, Cys-35, and Cys-37. The segment at 17 to 43 (RKSCCSCCPAGCNNCAKGCVCKEPASS) is alpha.

The protein belongs to the metallothionein superfamily. Type 1 family.

In terms of biological role, metallothioneins have a high content of cysteine residues that bind various heavy metals. In Colinus virginianus (Northern bobwhite), this protein is Metallothionein A.